Consider the following 171-residue polypeptide: Sec-independent protein translocase protein TatB (171 aa).

Residues 1 to 21 (MFDIGFSELLLVFIIGLVVLG) traverse the membrane as a helical segment. The segment at 117-171 (KDNEAAHEGVTPAAAQTQASSPEQKPETTPEPVVKPAADAEPKTAAPSPSSSDKP) is disordered. Residues 130-139 (AAQTQASSPE) show a composition bias toward polar residues.

It belongs to the TatB family. In terms of assembly, the Tat system comprises two distinct complexes: a TatABC complex, containing multiple copies of TatA, TatB and TatC subunits, and a separate TatA complex, containing only TatA subunits. Substrates initially bind to the TatABC complex, which probably triggers association of the separate TatA complex to form the active translocon.

The protein localises to the cell inner membrane. In terms of biological role, part of the twin-arginine translocation (Tat) system that transports large folded proteins containing a characteristic twin-arginine motif in their signal peptide across membranes. Together with TatC, TatB is part of a receptor directly interacting with Tat signal peptides. TatB may form an oligomeric binding site that transiently accommodates folded Tat precursor proteins before their translocation. The protein is Sec-independent protein translocase protein TatB of Escherichia coli O157:H7.